The following is a 473-amino-acid chain: MLQVYNTLTREKEIFKPVKEGEISIYACGPTVYNMPHIGNYRTFLMTDNVLRALEYLGYRVKLVMNITDIDDKTIRDSKAAGMTLKDFTDKYTAEFFKGLDMLNIKRAFAYPRATENVDGMIELARKLIEKGLAYEKDGSVYYRISGFPEYGKLSRLNFDNILIGASVDVDEYDKDNPRDFALLKASTPEEIERGIYYDSPWGKIRPGWHIECSVMAMNSFGPTLDIHTGGVDLIFPHHENEIAQSEGATGKPFVCTWIHGEHLIVEGEKMSKSKRNVFTLPEIVEKYGGEVVRFMFLSVHYRKKLDYSEAFAENAKNNYLRLKETLDNLEFSLKGADDKSYPGDLETLKALPELETQFRHALEDDFNTPRALTVFRELSRTANLYLEAGKNRKVLEKVHTLYRKFSDVLGLFAQAGKEEIPEEVFRLVEEREAARKKKDWGTSDTLREKIRTLGYIIQDKKEGPNVKKAEES.

Cys28 is a Zn(2+) binding site. The short motif at 30 to 40 is the 'HIGH' region element; sequence PTVYNMPHIGN. Positions 213, 238, and 242 each coordinate Zn(2+). The 'KMSKS' region signature appears at 270-274; sequence KMSKS. Lys273 serves as a coordination point for ATP.

Belongs to the class-I aminoacyl-tRNA synthetase family. Zn(2+) serves as cofactor.

It is found in the cytoplasm. The enzyme catalyses tRNA(Cys) + L-cysteine + ATP = L-cysteinyl-tRNA(Cys) + AMP + diphosphate. The protein is Cysteine--tRNA ligase of Methanosarcina acetivorans (strain ATCC 35395 / DSM 2834 / JCM 12185 / C2A).